Here is a 101-residue protein sequence, read N- to C-terminus: Small ubiquitin-related modifier 1 (101 aa).

The 78-residue stretch at 20 to 97 (EYIKLKVIGQ…IEVYQEQTGG (78 aa)) folds into the Ubiquitin-like domain. A Glycyl lysine isopeptide (Gly-Lys) (interchain with K-? in acceptor proteins) cross-link involves residue Gly-97. Residues 98-101 (HSTV) constitute a propeptide that is removed on maturation.

This sequence belongs to the ubiquitin family. SUMO subfamily. Interacts with SAE2, UBE2I, RANBP2, PIAS1 and PIAS2. Covalently attached to a number of proteins. In terms of processing, cleavage of precursor form by a sentrin-specific protease is necessary for function.

It localises to the nucleus membrane. It is found in the nucleus speckle. The protein resides in the cytoplasm. Its subcellular location is the nucleus. The protein localises to the PML body. It localises to the cell membrane. In terms of biological role, ubiquitin-like protein that can be covalently attached to proteins as a monomer or a lysine-linked polymer. Covalent attachment via an isopeptide bond to its substrates requires prior activation by the E1 complex SAE1-SAE2 and linkage to the E2 enzyme UBE2I. This post-translational modification on lysine residues of proteins plays a crucial role in a number of cellular processes such as nuclear transport, DNA replication and repair, mitosis and signal transduction. Polymeric SUMO1 chains are also susceptible to polyubiquitination which functions as a signal for proteasomal degradation of modified proteins. The polypeptide is Small ubiquitin-related modifier 1 (SUMO1) (Gallus gallus (Chicken)).